The chain runs to 563 residues: Pyruvate decarboxylase (563 aa).

Aspartate 28 and histidine 115 together coordinate pyruvate. Thiamine diphosphate is bound by residues threonine 390 and 413-415 (GSI). Position 444 (aspartate 444) interacts with Mg(2+). Residues 445–446 (GS) and 471–476 (NDGYTI) each bind thiamine diphosphate. Mg(2+)-binding residues include asparagine 471 and glycine 473. Residue glutamate 477 coordinates pyruvate.

This sequence belongs to the TPP enzyme family. Homotetramer. It depends on Mg(2+) as a cofactor. Thiamine diphosphate is required as a cofactor.

The catalysed reaction is a 2-oxocarboxylate + H(+) = an aldehyde + CO2. It carries out the reaction pyruvate + H(+) = acetaldehyde + CO2. In Kluyveromyces lactis (strain ATCC 8585 / CBS 2359 / DSM 70799 / NBRC 1267 / NRRL Y-1140 / WM37) (Yeast), this protein is Pyruvate decarboxylase (PDC1).